Consider the following 659-residue polypeptide: Zinc finger protein 304 (659 aa).

The 75-residue stretch at Val-14 to Ala-88 folds into the KRAB domain. 16 C2H2-type zinc fingers span residues His-89–His-111, Lys-115–His-139, Phe-251–His-273, His-279–His-301, Tyr-307–His-329, Tyr-335–His-357, Tyr-363–His-385, Tyr-391–His-413, Tyr-419–His-441, Tyr-447–His-469, Tyr-475–His-497, Tyr-503–His-525, Tyr-531–His-553, Tyr-559–His-581, Tyr-587–His-609, and Tyr-615–His-637.

Belongs to the krueppel C2H2-type zinc-finger protein family. As to quaternary structure, probably part of a corepressor complex containing ZNF304, TRIM28, SETDB1 and DNMT1; leading to promoter hypermethylation and transcriptional silencing. Probably associates with Polycomb group (PcG) complexes; leading to trimethylation of 'Lys-27' of histone H3 (H3K27me3). Interacts with USP28. Post-translationally, deubiquitinated by USP28; the deubiquitination leads to the stabilization of ZNF304 from proteolytic degradation. Expressed in undifferentiated embryonic stem cells (ESCs). Expressed strongly in colorectal cancers cells (CRCs). Expressed strongly in ovarian carcinoma (OC) tumor cell lines compared to non-transformed ovarian epithelial cells (at protein level). Expressed in lymphoid tissues, thyroid, adrenal gland, prostate, pancreas and skeletal muscles.

Its subcellular location is the nucleus. Acts as a transcriptional regulator and plays a role in gene silencing. Probably forms a corepressor complex required for activated KRAS-mediated promoter hypermethylation and transcriptional silencing of several tumor suppressor genes (TSGs) or other tumor-related genes in colorectal cancer (CRC) cells. Also required to maintain a transcriptionally repressive state of genes in undifferentiated embryonic stem cells (ESCs) by inducing trimethylation of 'Lys-27' of histone H3 (H3K27me3) in a Polycomb group (PcG) complexes-dependent manner. Associates at promoter regions of TSGs and mediates the recruitment of the corepressor complex containing the scaffolding protein TRIM28, methyltransferase DNMT1 and histone methyltransferase SETDB1 and/or the PcG complexes at those sites. Transcription factor involved in the metastatic cascade process by inducing cell migration and proliferation and gain resistance to anoikis of ovarian carcinoma (OC) cells via integrin-mediated signaling pathways. Associates with the ITGB1 promoter and positively regulates beta-1 integrin transcription expression. Promotes angiogenesis. Promotes tumor growth. This chain is Zinc finger protein 304, found in Homo sapiens (Human).